A 325-amino-acid polypeptide reads, in one-letter code: Delta(1)-pyrroline-2-carboxylate reductase (325 aa).

This sequence belongs to the ornithine cyclodeaminase/mu-crystallin family.

The enzyme catalyses L-proline + NAD(+) = 1-pyrroline-2-carboxylate + NADH + H(+). It catalyses the reaction L-proline + NADP(+) = 1-pyrroline-2-carboxylate + NADPH + H(+). Catalyzes the reduction of Delta(1)-pyrroline-2-carboxylate (Pyr2C) to L-proline, using preferentially NADPH over NADH as the electron donor. May be involved in a degradation pathway that converts trans-3-hydroxy-L-proline (t3LHyp) to L-proline. This is Delta(1)-pyrroline-2-carboxylate reductase from Bacillus cereus (strain ZK / E33L).